The following is a 99-amino-acid chain: HssA/B-like protein 41 (99 aa).

The disordered stretch occupies residues 1–29 (MTLFSSISSISNPMTSSKSSISSFGSGTS).

This sequence belongs to the hssA/B family.

This Dictyostelium discoideum (Social amoeba) protein is HssA/B-like protein 41 (hssl41).